We begin with the raw amino-acid sequence, 336 residues long: tRNA N6-adenosine threonylcarbamoyltransferase (336 aa).

Residues His-111 and His-115 each coordinate Fe cation. Residues 133–137 (LISGG), Asp-166, Gly-179, and Asn-276 each bind substrate. Position 301 (Asp-301) interacts with Fe cation.

This sequence belongs to the KAE1 / TsaD family. The cofactor is Fe(2+).

The protein localises to the cytoplasm. It carries out the reaction L-threonylcarbamoyladenylate + adenosine(37) in tRNA = N(6)-L-threonylcarbamoyladenosine(37) in tRNA + AMP + H(+). Functionally, required for the formation of a threonylcarbamoyl group on adenosine at position 37 (t(6)A37) in tRNAs that read codons beginning with adenine. Is involved in the transfer of the threonylcarbamoyl moiety of threonylcarbamoyl-AMP (TC-AMP) to the N6 group of A37, together with TsaE and TsaB. TsaD likely plays a direct catalytic role in this reaction. This Wolbachia pipientis subsp. Culex pipiens (strain wPip) protein is tRNA N6-adenosine threonylcarbamoyltransferase.